A 160-amino-acid chain; its full sequence is Ureidoglycolate lyase (160 aa).

It belongs to the ureidoglycolate lyase family. Homodimer. The cofactor is Ni(2+).

It carries out the reaction (S)-ureidoglycolate = urea + glyoxylate. Its pathway is nitrogen metabolism; (S)-allantoin degradation. Catalyzes the catabolism of the allantoin degradation intermediate (S)-ureidoglycolate, generating urea and glyoxylate. Involved in the utilization of allantoin as nitrogen source. This Salmonella enteritidis protein is Ureidoglycolate lyase.